Consider the following 124-residue polypeptide: Galanin peptides (124 aa).

The signal sequence occupies residues 1-19 (MARGSVILLGWLLLVVTLS). A propeptide spanning residues 20 to 30 (ATLGLGMPAKE) is cleaved from the precursor. Thr61 is subject to Threonine amide. Phosphoserine is present on residues Ser117 and Ser118.

The protein belongs to the galanin family. As to expression, expressed in retinal progenitor cells and retinal ganglion cells (at protein level).

It is found in the secreted. Its function is as follows. Endocrine hormone of the central and peripheral nervous systems that binds and activates the G protein-coupled receptors GALR1, GALR2, and GALR3. This small neuropeptide may regulate diverse physiologic functions including contraction of smooth muscle of the gastrointestinal and genitourinary tract, growth hormone and insulin release and adrenal secretion. The polypeptide is Galanin peptides (Gal) (Mus musculus (Mouse)).